The following is a 303-amino-acid chain: Ribonuclease Z (303 aa).

Positions 61, 63, 65, 66, 139, 207, and 266 each coordinate Zn(2+). Residue Asp65 is the Proton acceptor of the active site.

This sequence belongs to the RNase Z family. In terms of assembly, homodimer. The cofactor is Zn(2+).

It catalyses the reaction Endonucleolytic cleavage of RNA, removing extra 3' nucleotides from tRNA precursor, generating 3' termini of tRNAs. A 3'-hydroxy group is left at the tRNA terminus and a 5'-phosphoryl group is left at the trailer molecule.. Zinc phosphodiesterase, which displays some tRNA 3'-processing endonuclease activity. Probably involved in tRNA maturation, by removing a 3'-trailer from precursor tRNA. The protein is Ribonuclease Z of Clostridium kluyveri (strain ATCC 8527 / DSM 555 / NBRC 12016 / NCIMB 10680 / K1).